A 596-amino-acid chain; its full sequence is Cysteine--tRNA ligase (596 aa).

The unknown stretch occupies residues Met-1–Lys-199. Cys-212 is a binding site for Zn(2+). Positions Pro-214–Asn-224 match the 'HIGH' region motif. Positions 377, 403, and 407 each coordinate Zn(2+). Residues Lys-435–Ser-439 carry the 'KMSKS' region motif. Lys-438 contributes to the ATP binding site.

This sequence belongs to the class-I aminoacyl-tRNA synthetase family. Monomer. The cofactor is Zn(2+).

The protein resides in the cytoplasm. The catalysed reaction is tRNA(Cys) + L-cysteine + ATP = L-cysteinyl-tRNA(Cys) + AMP + diphosphate. This is Cysteine--tRNA ligase (cysS) from Mycoplasmopsis pulmonis (strain UAB CTIP) (Mycoplasma pulmonis).